A 100-amino-acid polypeptide reads, in one-letter code: Urease subunit gamma (100 aa).

Belongs to the urease gamma subunit family. Heterotrimer of UreA (gamma), UreB (beta) and UreC (alpha) subunits. Three heterotrimers associate to form the active enzyme.

It localises to the cytoplasm. It catalyses the reaction urea + 2 H2O + H(+) = hydrogencarbonate + 2 NH4(+). It functions in the pathway nitrogen metabolism; urea degradation; CO(2) and NH(3) from urea (urease route): step 1/1. The sequence is that of Urease subunit gamma from Acetivibrio thermocellus (strain ATCC 27405 / DSM 1237 / JCM 9322 / NBRC 103400 / NCIMB 10682 / NRRL B-4536 / VPI 7372) (Clostridium thermocellum).